A 126-amino-acid chain; its full sequence is Profilin (126 aa).

It belongs to the profilin family. Occurs in many kinds of cells as a complex with monomeric actin in a 1:1 ratio.

Its subcellular location is the cytoplasm. It localises to the cytoskeleton. Binds to actin and affects the structure of the cytoskeleton. At high concentrations, profilin prevents the polymerization of actin, whereas it enhances it at low concentrations. By binding to PIP2, it inhibits the formation of IP3 and DG. In Branchiostoma belcheri (Amphioxus), this protein is Profilin.